The following is a 1052-amino-acid chain: Protein argonaute 14 (1052 aa).

Over residues 1-39 the composition is skewed to gly residues; it reads MASRGGDGLVGGGRGPLGGRDGRGRGPAGGRGGGRGGGH. Disordered stretches follow at residues 1-127 and 170-194; these read MASR…TPAV and GGRPAPPAAPPAPIPVSSKGVAPPS. The segment covering 40-49 has biased composition (low complexity); that stretch reads PQQQQQQQPG. 2 stretches are compositionally biased toward gly residues: residues 50–59 and 66–81; these read YGRGDGGGRG and GVVGRGTGGGGGGGRG. Low complexity predominate over residues 97–117; the sequence is VRPAMAAAPAASTPGPVAVAA. Pro residues predominate over residues 173 to 183; that stretch reads PAPPAAPPAPI. The region spanning 394–510 is the PAZ domain; it reads SVVEYVKNCL…LPMEVCTIVE (117 aa). The region spanning 677 to 1009 is the Piwi domain; the sequence is LLIVILPDVN…AAFRARYYDE (333 aa).

Belongs to the argonaute family. Ago subfamily. In terms of tissue distribution, expressed in seeds.

Its function is as follows. Probably involved in the RNA silencing pathway. May bind to short RNAs such as microRNAs (miRNAs) or short interfering RNAs (siRNAs), and represses the translation of mRNAs which are complementary to them. This Oryza sativa subsp. japonica (Rice) protein is Protein argonaute 14 (AGO14).